The following is an 835-amino-acid chain: Microcephalin (835 aa).

Positions 1–93 (MAAPILKDVV…AHIDESLFPA (93 aa)) constitute a BRCT 1 domain. Ser279, Ser287, Ser296, and Ser333 each carry phosphoserine. Disordered stretches follow at residues 313–381 (PDQK…RRSI) and 419–443 (DNLK…AQLS). At Thr335 the chain carries Phosphothreonine. Over residues 343–361 (LLIHSRPRSSSVKRKRVSH) the composition is skewed to basic residues. Polar residues predominate over residues 434–443 (QLPSSPAQLS). Residue Ser548 is modified to Phosphoserine. Positions 555–584 (AVGLKSTQNKGTTSKISNSSEGEAQSEHEP) are disordered. The segment covering 559 to 577 (KSTQNKGTTSKISNSSEGE) has biased composition (polar residues). 2 BRCT domains span residues 640–730 (SGRG…PFEL) and 751–833 (YRGT…NYLL).

Interacts with CDC27 and maybe other components of the APC/C complex. Interacts with histone variant H2AX under DNA damage conditions. In terms of tissue distribution, expressed in fetal brain, liver and kidney.

It localises to the cytoplasm. Its subcellular location is the cytoskeleton. The protein resides in the microtubule organizing center. The protein localises to the centrosome. Functionally, implicated in chromosome condensation and DNA damage induced cellular responses. May play a role in neurogenesis and regulation of the size of the cerebral cortex. This is Microcephalin from Homo sapiens (Human).